Reading from the N-terminus, the 740-residue chain is ATP-dependent RNA helicase DDX1 (740 aa).

The interval 1–448 is interaction with dsRNA; the sequence is MAAFSEMGVM…ETVHHVVVPV (448 aa). Residues 2-428 enclose the Helicase ATP-binding domain; sequence AAFSEMGVMP…SEKIMHFPTW (427 aa). Residue 46 to 53 participates in ATP binding; sequence AETGSGKT. Residues 70-247 form the B30.2/SPRY domain; the sequence is DQQEGKKGKA…LKFNFGEEDF (178 aa). A DEAD box motif is present at residues 370 to 373; it reads DEAD. One can recognise a Helicase C-terminal domain in the interval 493–681; that stretch reads KGEYIVRAIK…QVEPDIKVPL (189 aa).

This sequence belongs to the DEAD box helicase family. DDX1 subfamily.

Its subcellular location is the nucleus. The protein localises to the cytoplasm. It is found in the cytoplasmic granule. The protein resides in the cytosol. It localises to the mitochondrion. It carries out the reaction ATP + H2O = ADP + phosphate + H(+). Its function is as follows. Acts as an ATP-dependent RNA helicase, able to unwind both RNA-RNA and RNA-DNA duplexes. Possesses 5' single-stranded RNA overhang nuclease activity. Acts as a positive regulator of transcription. May be involved in 3'-end cleavage and polyadenylation of pre-mRNAs. Binds DNA and RNA. Component of the tRNA-splicing ligase complex required to facilitate the enzymatic turnover of catalytic subunit rtcb. Binds (via helicase ATP-binding domain) on both short and long poly(I:C) dsRNA. In Xenopus laevis (African clawed frog), this protein is ATP-dependent RNA helicase DDX1 (ddx1).